Here is a 134-residue protein sequence, read N- to C-terminus: Cytochrome b5 isoform B (134 aa).

The Cytochrome b5 heme-binding domain maps to 5 to 81 (AKIFTLSEVS…MEQYYVGEID (77 aa)). 2 residues coordinate heme: H40 and H64. The chain crosses the membrane as a helical span at residues 107 to 127 (FIIKLLQFLVPLAILGLAVGI).

Belongs to the cytochrome b5 family. As to quaternary structure, interacts with CER1, FAH1, FAH2 and BI-1.

Its subcellular location is the endoplasmic reticulum membrane. Functionally, membrane bound hemoprotein which function as an electron carrier for several membrane bound oxygenases, including fatty acid desaturases. The chain is Cytochrome b5 isoform B from Arabidopsis thaliana (Mouse-ear cress).